The primary structure comprises 87 residues: Phosphoribosyl-ATP pyrophosphatase (87 aa).

The protein belongs to the PRA-PH family.

It is found in the cytoplasm. It catalyses the reaction 1-(5-phospho-beta-D-ribosyl)-ATP + H2O = 1-(5-phospho-beta-D-ribosyl)-5'-AMP + diphosphate + H(+). Its pathway is amino-acid biosynthesis; L-histidine biosynthesis; L-histidine from 5-phospho-alpha-D-ribose 1-diphosphate: step 2/9. The protein is Phosphoribosyl-ATP pyrophosphatase of Paenarthrobacter aurescens (strain TC1).